We begin with the raw amino-acid sequence, 207 residues long: Outer-membrane lipoprotein LolB (207 aa).

The signal sequence occupies residues 1-21 (MPLPDFRLIRLLPLAALVLTA). Cys-22 is lipidated: N-palmitoyl cysteine. A lipid anchor (S-diacylglycerol cysteine) is attached at Cys-22.

Belongs to the LolB family. Monomer.

It is found in the cell outer membrane. Its function is as follows. Plays a critical role in the incorporation of lipoproteins in the outer membrane after they are released by the LolA protein. The polypeptide is Outer-membrane lipoprotein LolB (Escherichia coli O127:H6 (strain E2348/69 / EPEC)).